The chain runs to 78 residues: NAD(P)H-quinone oxidoreductase subunit O (78 aa).

This sequence belongs to the complex I NdhO subunit family. As to quaternary structure, NDH-1 can be composed of about 15 different subunits; different subcomplexes with different compositions have been identified which probably have different functions.

It localises to the cellular thylakoid membrane. It catalyses the reaction a plastoquinone + NADH + (n+1) H(+)(in) = a plastoquinol + NAD(+) + n H(+)(out). The catalysed reaction is a plastoquinone + NADPH + (n+1) H(+)(in) = a plastoquinol + NADP(+) + n H(+)(out). Functionally, NDH-1 shuttles electrons from an unknown electron donor, via FMN and iron-sulfur (Fe-S) centers, to quinones in the respiratory and/or the photosynthetic chain. The immediate electron acceptor for the enzyme in this species is believed to be plastoquinone. Couples the redox reaction to proton translocation, and thus conserves the redox energy in a proton gradient. Cyanobacterial NDH-1 also plays a role in inorganic carbon-concentration. The sequence is that of NAD(P)H-quinone oxidoreductase subunit O from Prochlorococcus marinus (strain AS9601).